Here is a 75-residue protein sequence, read N- to C-terminus: Cytochrome c oxidase subunit 6C (75 aa).

Residues Met1–Gly13 lie on the Mitochondrial matrix side of the membrane. The chain crosses the membrane as a helical span at residues Leu14 to Arg54. The Mitochondrial intermembrane segment spans residues Asn55–Lys75.

Belongs to the cytochrome c oxidase subunit 6c family. In terms of assembly, component of the cytochrome c oxidase (complex IV, CIV), a multisubunit enzyme composed of 14 subunits. The complex is composed of a catalytic core of 3 subunits MT-CO1, MT-CO2 and MT-CO3, encoded in the mitochondrial DNA, and 11 supernumerary subunits COX4I, COX5A, COX5B, COX6A, COX6B, COX6C, COX7A, COX7B, COX7C, COX8 and NDUFA4, which are encoded in the nuclear genome. The complex exists as a monomer or a dimer and forms supercomplexes (SCs) in the inner mitochondrial membrane with NADH-ubiquinone oxidoreductase (complex I, CI) and ubiquinol-cytochrome c oxidoreductase (cytochrome b-c1 complex, complex III, CIII), resulting in different assemblies (supercomplex SCI(1)III(2)IV(1) and megacomplex MCI(2)III(2)IV(2)).

It is found in the mitochondrion inner membrane. It participates in energy metabolism; oxidative phosphorylation. Component of the cytochrome c oxidase, the last enzyme in the mitochondrial electron transport chain which drives oxidative phosphorylation. The respiratory chain contains 3 multisubunit complexes succinate dehydrogenase (complex II, CII), ubiquinol-cytochrome c oxidoreductase (cytochrome b-c1 complex, complex III, CIII) and cytochrome c oxidase (complex IV, CIV), that cooperate to transfer electrons derived from NADH and succinate to molecular oxygen, creating an electrochemical gradient over the inner membrane that drives transmembrane transport and the ATP synthase. Cytochrome c oxidase is the component of the respiratory chain that catalyzes the reduction of oxygen to water. Electrons originating from reduced cytochrome c in the intermembrane space (IMS) are transferred via the dinuclear copper A center (CU(A)) of subunit 2 and heme A of subunit 1 to the active site in subunit 1, a binuclear center (BNC) formed by heme A3 and copper B (CU(B)). The BNC reduces molecular oxygen to 2 water molecules using 4 electrons from cytochrome c in the IMS and 4 protons from the mitochondrial matrix. This chain is Cytochrome c oxidase subunit 6C (COX6C), found in Trachypithecus cristatus (Silvered leaf-monkey).